The sequence spans 626 residues: Zinc finger protein 471 (626 aa).

The KRAB domain maps to 14–85 (VTFKDVAIDF…TSEMTRSPFS (72 aa)). C2H2-type zinc fingers lie at residues 206–228 (FKCN…FRIH), 234–256 (YACE…HRTH), 262–284 (FECK…QRIH), 290–312 (YKCK…QRIH), 318–340 (YECK…QRCH), 346–369 (YECI…RSYH), 375–397 (FNCI…RRIH), 403–425 (YKCG…QRIH), 431–453 (YECD…QRVH), 459–481 (YECK…LRIH), 487–509 (YECK…QRIH), 515–537 (YECI…QKTH), 543–565 (YECN…QRIH), 571–593 (YKCT…QRLH), and 599–621 (YQCF…QRSH).

The protein belongs to the krueppel C2H2-type zinc-finger protein family.

It localises to the nucleus. Its function is as follows. May be involved in transcriptional regulation. The polypeptide is Zinc finger protein 471 (ZNF471) (Homo sapiens (Human)).